Reading from the N-terminus, the 285-residue chain is RNA polymerase sigma factor RpoH (285 aa).

The sigma-70 factor domain-2 stretch occupies residues 53–122 (LILSHLRFVA…IHEYVLRNWR (70 aa)). The short motif at 77 to 80 (DLIQ) is the Interaction with polymerase core subunit RpoC element. The segment at 229 to 281 (ALEGLDERSQHIIRARWLDDDNKSTLQELADQYGVSAERVRQLEKNAMKKLKM) is sigma-70 factor domain-4. The segment at residues 254–273 (LQELADQYGVSAERVRQLEK) is a DNA-binding region (H-T-H motif).

The protein belongs to the sigma-70 factor family. RpoH subfamily. Interacts with the RNA polymerase core enzyme.

The protein localises to the cytoplasm. In terms of biological role, sigma factors are initiation factors that promote the attachment of RNA polymerase to specific initiation sites and are then released. This sigma factor is involved in regulation of expression of heat shock genes. This Serratia marcescens protein is RNA polymerase sigma factor RpoH.